A 506-amino-acid polypeptide reads, in one-letter code: Phenylacetaldehyde synthase (506 aa).

Positions 101, 202, and 317 each coordinate L-phenylalanine. K318 carries the N6-(pyridoxal phosphate)lysine modification.

It belongs to the group II decarboxylase family. Homotetramer. It depends on pyridoxal 5'-phosphate as a cofactor. As to expression, highly expressed in corolla limbs and at lower levels in corolla tubes and ovaries.

It catalyses the reaction L-phenylalanine + O2 + H2O + H(+) = 2-phenylacetaldehyde + H2O2 + NH4(+) + CO2. Its function is as follows. Bifunctional enzyme that catalyzes the decarboxylation of L-phenylalanine to 2-phenylethylamine, which is then oxidized to form 2-phenylacetaldehyde, a constituent of floral scent. 2-phenylacetaldehyde is a precursor of 2-phenylethanol, another constituent of floral scent. The chain is Phenylacetaldehyde synthase from Petunia hybrida (Petunia).